The primary structure comprises 367 residues: Cobalt-precorrin-5B C(1)-methyltransferase (367 aa).

Belongs to the CbiD family.

It carries out the reaction Co-precorrin-5B + S-adenosyl-L-methionine = Co-precorrin-6A + S-adenosyl-L-homocysteine. The protein operates within cofactor biosynthesis; adenosylcobalamin biosynthesis; cob(II)yrinate a,c-diamide from sirohydrochlorin (anaerobic route): step 6/10. Functionally, catalyzes the methylation of C-1 in cobalt-precorrin-5B to form cobalt-precorrin-6A. This Thermosynechococcus vestitus (strain NIES-2133 / IAM M-273 / BP-1) protein is Cobalt-precorrin-5B C(1)-methyltransferase.